A 469-amino-acid chain; its full sequence is 6-phospho-beta-galactosidase (469 aa).

The D-galactose 6-phosphate site is built by Q19, H116, N159, E160, and N297. Catalysis depends on E160, which acts as the Proton donor. E375 serves as the catalytic Nucleophile. Positions 428, 429, 435, and 437 each coordinate D-galactose 6-phosphate.

This sequence belongs to the glycosyl hydrolase 1 family.

It catalyses the reaction a 6-phospho-beta-D-galactoside + H2O = D-galactose 6-phosphate + an alcohol. It participates in carbohydrate metabolism; lactose degradation; D-galactose 6-phosphate and beta-D-glucose from lactose 6-phosphate: step 1/1. This chain is 6-phospho-beta-galactosidase, found in Streptococcus equi subsp. zooepidemicus (strain H70).